A 295-amino-acid chain; its full sequence is Small ribosomal subunit protein uS2 (295 aa).

Ser2 carries the N-acetylserine modification. Residue Ser43 is modified to Phosphoserine. The residue at position 52 (Lys52) is an N6-acetyllysine. The interaction with PPP1R16B stretch occupies residues Thr54 to Gln113. The residue at position 89 (Lys89) is an N6-acetyllysine; alternate. Residue Lys89 forms a Glycyl lysine isopeptide (Lys-Gly) (interchain with G-Cter in SUMO2); alternate linkage. Position 97 is a phosphothreonine (Thr97). 2 laminin-binding regions span residues Ile161–Arg180 and Arg205–Gly229. 5 [DE]-W-[ST] repeats span residues Glu230–Thr232, Asp247–Ser249, Asp266–Ser268, Asp275–Ser277, and Glu293–Ser295. Positions Gln242–Ser295 are laminin-binding. A disordered region spans residues Asp266–Ser295.

This sequence belongs to the universal ribosomal protein uS2 family. Monomer (37LRP) and homodimer (67LR). Component of the small ribosomal subunit. Mature ribosomes consist of a small (40S) and a large (60S) subunit. The 40S subunit contains about 33 different proteins and 1 molecule of RNA (18S). The 60S subunit contains about 49 different proteins and 3 molecules of RNA (28S, 5.8S and 5S). Interacts with RPS21. Interacts with several laminins including at least LAMB1. Interacts with MDK. The mature dimeric form interacts with PPP1R16B (via its fourth ankyrin repeat). Interacts with PPP1CA only in the presence of PPP1R16B. Acylated. Acylation may be a prerequisite for conversion of the monomeric 37 kDa laminin receptor precursor (37LRP) to the mature dimeric 67 kDa laminin receptor (67LR), and may provide a mechanism for membrane association. In terms of processing, cleaved by stromelysin-3 (ST3) at the cell surface. Cleavage by stromelysin-3 may be a mechanism to alter cell-extracellular matrix interactions.

Its subcellular location is the cell membrane. The protein resides in the cytoplasm. The protein localises to the nucleus. In terms of biological role, required for the assembly and/or stability of the 40S ribosomal subunit. Required for the processing of the 20S rRNA-precursor to mature 18S rRNA in a late step of the maturation of 40S ribosomal subunits. Also functions as a cell surface receptor for laminin. Plays a role in cell adhesion to the basement membrane and in the consequent activation of signaling transduction pathways. May play a role in cell fate determination and tissue morphogenesis. Also acts as a receptor for several other ligands, including the pathogenic prion protein, viruses, and bacteria. Acts as a PPP1R16B-dependent substrate of PPP1CA. In Chlorocebus aethiops (Green monkey), this protein is Small ribosomal subunit protein uS2.